Reading from the N-terminus, the 115-residue chain is Large ribosomal subunit protein bL19 (115 aa).

It belongs to the bacterial ribosomal protein bL19 family.

Functionally, this protein is located at the 30S-50S ribosomal subunit interface and may play a role in the structure and function of the aminoacyl-tRNA binding site. This is Large ribosomal subunit protein bL19 from Klebsiella pneumoniae (strain 342).